A 449-amino-acid chain; its full sequence is Phosphoglucosamine mutase (449 aa).

Catalysis depends on Ser100, which acts as the Phosphoserine intermediate. Mg(2+)-binding residues include Ser100, Asp241, Asp243, and Asp245. At Ser100 the chain carries Phosphoserine.

It belongs to the phosphohexose mutase family. Mg(2+) is required as a cofactor. Activated by phosphorylation.

The enzyme catalyses alpha-D-glucosamine 1-phosphate = D-glucosamine 6-phosphate. Catalyzes the conversion of glucosamine-6-phosphate to glucosamine-1-phosphate. This Clostridium botulinum (strain Loch Maree / Type A3) protein is Phosphoglucosamine mutase.